Here is a 639-residue protein sequence, read N- to C-terminus: Sodium-dependent phosphate transport protein 2A (639 aa).

The Cytoplasmic portion of the chain corresponds to 1-103; that stretch reads MISYGENLGG…LRRAGVTLLK (103 aa). Phosphoserine occurs at positions 14 and 34. Residues 104 to 125 traverse the membrane as a helical segment; the sequence is VPLMLSFLYLFVCSLDVLSSAF. Topologically, residues 126-145 are extracellular; the sequence is QLAGGKVAGDIFKDNAILSN. A helical membrane pass occupies residues 146–163; sequence PVAGLVVGILVTVLVQSS. The Cytoplasmic segment spans residues 164–165; that stretch reads ST. Residues 166 to 185 form a helical membrane-spanning segment; sequence STSIVVSMVSSGLLEVSSAI. The Extracellular portion of the chain corresponds to 186–347; that stretch reads PIIMGSNIGT…HIFVDTGLPD (162 aa). 2 cysteine pairs are disulfide-bonded: Cys-225–Cys-522 and Cys-306–Cys-336. Residues Asn-298, Asn-323, and Asn-330 are each glycosylated (N-linked (GlcNAc...) asparagine). The helical transmembrane segment at 348 to 370 threads the bilayer; that stretch reads LAVGLILLAGSLALLCTCLILLV. Residues 371-412 are Cytoplasmic-facing; the sequence is KMLNSLLKGQVAKVIQKVINTDFPTPFTWATGYFAMVVGASM. Residues 413 to 436 traverse the membrane as a helical segment; it reads TFVVQSSSVFTSAITPLIGLGVIS. The Extracellular segment spans residues 437 to 466; that stretch reads IERAYPLTLGSNIGTTTTAILAALASPREK. A helical transmembrane segment spans residues 467 to 487; that stretch reads LSSAFQIALCHFFFNISGILL. Residues 488–513 are Cytoplasmic-facing; the sequence is WYPVPCTRLPIRMAKALGKRTAKYRW. Thr-508 carries the phosphothreonine; by PKC modification. A helical transmembrane segment spans residues 514–534; sequence FAVLYLLLCFLLLPSMVFGLS. The Extracellular segment spans residues 535–539; it reads MAGWR. The helical transmembrane segment at 540 to 561 threads the bilayer; that stretch reads AMVGVGAPFGALLAFVVLVSAL. The Cytoplasmic portion of the chain corresponds to 562–639; sequence QHRSPGCLPK…MPHHHDATRL (78 aa). Ser-607 bears the Phosphoserine mark. The residue at position 623 (Thr-623) is a Phosphothreonine. At Ser-625 the chain carries Phosphoserine.

Belongs to the SLC34A transporter family. As to quaternary structure, interacts via its C-terminal region with NHERF4. Interacts with NHERF1. Interacts with TMEM174; regulates SLC34A1 internalization by PTH and FGF23.

It localises to the apical cell membrane. It is found in the cell membrane. It catalyses the reaction 3 Na(+)(out) + phosphate(out) = 3 Na(+)(in) + phosphate(in). In terms of biological role, involved in actively transporting phosphate into cells via Na(+) cotransport in the renal brush border membrane. The cotransport has a Na(+):Pi stoichiometry of 3:1 and is electrogenic. The polypeptide is Sodium-dependent phosphate transport protein 2A (Ovis aries (Sheep)).